The chain runs to 424 residues: Folate-like transporter 3 (424 aa).

N35 is a glycosylation site (N-linked (GlcNAc...) asparagine). Transmembrane regions (helical) follow at residues V55 to I75, L78 to L98, L101 to V119, A136 to W156, and I164 to P184. An N-linked (GlcNAc...) asparagine glycan is attached at N254. 3 helical membrane-spanning segments follow: residues G313 to I333, L361 to I381, and F392 to I412.

The protein belongs to the reduced folate carrier (RFC) transporter (TC 2.A.48) family.

It is found in the membrane. The protein is Folate-like transporter 3 (folt-3) of Caenorhabditis elegans.